Here is a 569-residue protein sequence, read N- to C-terminus: Proline--tRNA ligase (569 aa).

This sequence belongs to the class-II aminoacyl-tRNA synthetase family. ProS type 1 subfamily. As to quaternary structure, homodimer.

The protein resides in the cytoplasm. It catalyses the reaction tRNA(Pro) + L-proline + ATP = L-prolyl-tRNA(Pro) + AMP + diphosphate. Functionally, catalyzes the attachment of proline to tRNA(Pro) in a two-step reaction: proline is first activated by ATP to form Pro-AMP and then transferred to the acceptor end of tRNA(Pro). As ProRS can inadvertently accommodate and process non-cognate amino acids such as alanine and cysteine, to avoid such errors it has two additional distinct editing activities against alanine. One activity is designated as 'pretransfer' editing and involves the tRNA(Pro)-independent hydrolysis of activated Ala-AMP. The other activity is designated 'posttransfer' editing and involves deacylation of mischarged Ala-tRNA(Pro). The misacylated Cys-tRNA(Pro) is not edited by ProRS. The protein is Proline--tRNA ligase of Nitrosospira multiformis (strain ATCC 25196 / NCIMB 11849 / C 71).